The sequence spans 440 residues: Ribulose bisphosphate carboxylase large chain (440 aa).

Lys4 is modified (N6,N6,N6-trimethyllysine). Residues Asn113 and Thr163 each coordinate substrate. Lys165 acts as the Proton acceptor in catalysis. Lys167 serves as a coordination point for substrate. 3 residues coordinate Mg(2+): Lys191, Asp193, and Glu194. Position 191 is an N6-carboxylysine (Lys191). Catalysis depends on His284, which acts as the Proton acceptor. Substrate contacts are provided by Arg285, His317, and Ser369.

Belongs to the RuBisCO large chain family. Type I subfamily. As to quaternary structure, heterohexadecamer of 8 large chains and 8 small chains; disulfide-linked. The disulfide link is formed within the large subunit homodimers. Requires Mg(2+) as cofactor. Post-translationally, the disulfide bond which can form in the large chain dimeric partners within the hexadecamer appears to be associated with oxidative stress and protein turnover.

It localises to the plastid. It is found in the chloroplast. The enzyme catalyses 2 (2R)-3-phosphoglycerate + 2 H(+) = D-ribulose 1,5-bisphosphate + CO2 + H2O. The catalysed reaction is D-ribulose 1,5-bisphosphate + O2 = 2-phosphoglycolate + (2R)-3-phosphoglycerate + 2 H(+). Functionally, ruBisCO catalyzes two reactions: the carboxylation of D-ribulose 1,5-bisphosphate, the primary event in carbon dioxide fixation, as well as the oxidative fragmentation of the pentose substrate in the photorespiration process. Both reactions occur simultaneously and in competition at the same active site. This chain is Ribulose bisphosphate carboxylase large chain, found in Onoclea sensibilis (Sensitive fern).